A 1044-amino-acid polypeptide reads, in one-letter code: Elongation factor 3B (1044 aa).

Ser2 is subject to N-acetylserine. An HEAT 1 repeat occupies 5 to 42 (QQSITVLEELFRKLETATSETREGISSELSSFLNGNII). The ADP site is built by Ile42, His44, and Ser83. 6 HEAT repeats span residues 86-123 (PYIV…AVNP), 124-162 (VAVK…AAKE), 166-203 (LRMP…TVDN), 205-241 (DIER…EVTP), 242-279 (ATLS…LVED), and 285-323 (PFLG…VGNV). An N6,N6,N6-trimethyllysine mark is found at Lys187 and Lys196. ADP is bound by residues Thr392, His396, and Glu397. ABC transporter domains lie at 426-641 (DEGE…YYEL) and 667-993 (VKVS…KKEE). Asn703 is an ADP binding site. Lys789 carries the post-translational modification N6,N6,N6-trimethyllysine. 3 residues coordinate ADP: Glu922, Asn925, and His951. Thr972 carries the phosphothreonine modification. Ser974 is modified (phosphoserine). Residues 975–1044 (GHNWVAGQGA…DEYVSSDEDF (70 aa)) are disordered. A compositionally biased stretch (basic and acidic residues) spans 987–999 (RIEKKEEEGDKFD). Residues 1020–1031 (RKKKKERMKKKK) show a composition bias toward basic residues. Residues Ser1039 and Ser1040 each carry the phosphoserine modification.

It belongs to the ABC transporter superfamily. ABCF family. EF3 subfamily. Monomer.

The protein localises to the cytoplasm. The catalysed reaction is ATP + H2O = ADP + phosphate + H(+). It functions in the pathway protein biosynthesis; polypeptide chain elongation. In terms of biological role, ribosome-dependent ATPase that promotes the translation of proteins required for detoxification of reactive oxygen species. Required for the ATP-dependent release of deacylated tRNA from the ribosomal E-site during protein biosynthesis. Stimulates the eEF1A-dependent binding of aminoacyl-tRNA to the ribosomal A-site, which has reduced affinity for tRNA as long as the E-site is occupied. Assists translation termination by stimulating the release of nascent protein from the ribosome by release factors. This Saccharomyces cerevisiae (strain ATCC 204508 / S288c) (Baker's yeast) protein is Elongation factor 3B.